The primary structure comprises 707 residues: Dendrin (707 aa).

5 disordered regions span residues 1–22 (MLDG…DEES), 67–86 (QNRT…RRPW), 94–195 (ATNW…PWGG), 213–273 (AGTA…KKRL), and 342–377 (TEVA…GSEE). The stretch at 103-134 (AEVRAREQEKRKAASQEREAKETERKRRKAGG) forms a coiled coil. Basic and acidic residues predominate over residues 105–127 (VRAREQEKRKAASQEREAKETER). The segment at 113–131 (RKAASQEREAKETERKRRK) is nuclear localization. The tract at residues 186–236 (GVAWAGPWGGRRPGPPSYEAHLLLRGAAGTAPRRRWDRPPPYVAPPSYEGP) is interaction with MAGI2. The segment at 340–434 (PVTEVALSGS…LEVWKVTRRA (95 aa)) is interaction with ACTN1. Over residues 359–369 (PRSRQHLRGSR) the composition is skewed to basic residues. Position 387 is a phosphoserine (serine 387). Disordered regions lie at residues 389–421 (KKPP…EGTE) and 517–707 (RVLN…GKRE). The tract at residues 406 to 707 (GGTGWKESLG…TRKTPQGKRE (302 aa)) is interaction with CD2AP and NPHS1. Basic and acidic residues-rich tracts occupy residues 524-544 (EGRE…EERS) and 692-707 (GLVR…GKRE).

In terms of assembly, forms a ternary complex with MAGI2 and SH3KBP1; recruits DDN to the cytoplasm. Interacts with MAGI1. Interacts with ACTN1 and may interact with WWC1. Interacts with the podocyte slit diaphragm proteins CD2AP, NPHS1 and NPHS2; the interaction with CD2AP and NPHS1 is direct. In terms of tissue distribution, specifically expressed in forebrain structures, particularly in neocortex, olfactory bulb, hippocampus, caudate-putamen, and limbic system (at protein level). Also detected in spleen, liver, kidney and placenta (at protein level).

It localises to the cell projection. The protein localises to the dendritic spine membrane. The protein resides in the cytoplasm. It is found in the endoplasmic reticulum membrane. Its subcellular location is the perikaryon. It localises to the nucleus. Functionally, promotes apoptosis of kidney glomerular podocytes. Podocytes are highly specialized cells essential to the ultrafiltration of blood, resulting in the extraction of urine and the retention of protein. This chain is Dendrin (Ddn), found in Rattus norvegicus (Rat).